A 460-amino-acid chain; its full sequence is Baeyer-Villiger oxidase AgnL3 (460 aa).

Belongs to the questin oxidase family. NADPH is required as a cofactor.

It participates in secondary metabolite biosynthesis. Functionally, baeyer-Villiger oxidase; part of the gene cluster that mediates the biosynthesis of agnestins, dihydroxy-xanthone metabolites. The pathway begins with the assembly and cyclization of atrochrysone thioester by the non-reducing polyketide synthase Agnpks1. The atrochrysone carboxyl ACP thioesterase AgnL7 then breaks the thioester bond and releases the atrochrysone carboxylic acid as the first enzyme-free intermediate. The decarboxylase AgnL1 then catalyzes the concerted decarboxylation-elimination required to convert atochrysone carboxylic acid into emodin anthrone, which is further oxidized to emodin by the anthrone oxygenase AgnL2. Emodin then undergoes reduction catalyzed by the oxidoreductase AgnL4 to yield the dihydroquinone tautomer which is the substrate for reduction by the short chain dehydrogenase AgnL6 reduction to produce hydroxyketone, followed by AgnL8 dehydration and likely spontaneous autoxidation to chrysophanol. Baeyer-Villiger oxidation by the oxidase AgnL3 leads to monodictyphenone via cleavage of the C-10/C-10a bond of chrysophanol. Alternative cleavage at the C-4a/C-10 bond of chrysophanol also leads to the formation some cephalone F. Further conversion to agnestins A and B, requires reduction to dihydro-monodictyphenone, oxidation to agnestin C probably via an epoxide, and rearrangement to either agnestin A or agnestin B directly, although agnestin A or agnestin B can also interconvert. Within the cluster, AgnR1 is the only unassigned oxidoreductase present which could be involved in this conversion. However, AgnR1 seems not to be involved in this step, and thus genes involved in the proposed oxidation/reduction may be located elsewhere on the genome. Further agnestin A derivatives are probably formed by spontaneous decarboxylations, dehydrations and methanolysis reactions. This Paecilomyces divaricatus (Penicillium divaricatum) protein is Baeyer-Villiger oxidase AgnL3.